The primary structure comprises 233 residues: Probable GTP-binding protein EngB (233 aa).

The EngB-type G domain maps to 23–209; it reads AVPEVAFAGR…QRIVAGWLCL (187 aa). Residues 31–38, 58–62, 82–85, 149–152, and 188–190 contribute to the GTP site; these read GRSNAGKS, GRTQH, DLPG, TKAD, and FSS. Residues Ser-38 and Thr-60 each coordinate Mg(2+).

The protein belongs to the TRAFAC class TrmE-Era-EngA-EngB-Septin-like GTPase superfamily. EngB GTPase family. The cofactor is Mg(2+).

Necessary for normal cell division and for the maintenance of normal septation. The sequence is that of Probable GTP-binding protein EngB from Ralstonia pickettii (strain 12J).